A 315-amino-acid polypeptide reads, in one-letter code: Porphobilinogen deaminase (315 aa).

Cys-241 carries the post-translational modification S-(dipyrrolylmethanemethyl)cysteine.

It belongs to the HMBS family. Monomer. Requires dipyrromethane as cofactor.

The enzyme catalyses 4 porphobilinogen + H2O = hydroxymethylbilane + 4 NH4(+). It functions in the pathway porphyrin-containing compound metabolism; protoporphyrin-IX biosynthesis; coproporphyrinogen-III from 5-aminolevulinate: step 2/4. Functionally, tetrapolymerization of the monopyrrole PBG into the hydroxymethylbilane pre-uroporphyrinogen in several discrete steps. The polypeptide is Porphobilinogen deaminase (Nitratidesulfovibrio vulgaris (strain ATCC 29579 / DSM 644 / CCUG 34227 / NCIMB 8303 / VKM B-1760 / Hildenborough) (Desulfovibrio vulgaris)).